Reading from the N-terminus, the 260-residue chain is Proteasome subunit alpha (260 aa).

This sequence belongs to the peptidase T1A family. As to quaternary structure, the 20S proteasome core is composed of 14 alpha and 14 beta subunits that assemble into four stacked heptameric rings, resulting in a barrel-shaped structure. The two inner rings, each composed of seven catalytic beta subunits, are sandwiched by two outer rings, each composed of seven alpha subunits. The catalytic chamber with the active sites is on the inside of the barrel. Has a gated structure, the ends of the cylinder being occluded by the N-termini of the alpha-subunits. Is capped at one or both ends by the proteasome regulatory ATPase, PAN.

The protein localises to the cytoplasm. Its activity is regulated as follows. The formation of the proteasomal ATPase PAN-20S proteasome complex, via the docking of the C-termini of PAN into the intersubunit pockets in the alpha-rings, triggers opening of the gate for substrate entry. Interconversion between the open-gate and close-gate conformations leads to a dynamic regulation of the 20S proteasome proteolysis activity. Functionally, component of the proteasome core, a large protease complex with broad specificity involved in protein degradation. This is Proteasome subunit alpha from Thermococcus sp. (strain JCM 11816 / KS-1).